We begin with the raw amino-acid sequence, 940 residues long: Coatomer subunit beta (940 aa).

HEAT repeat units lie at residues 11 to 48, 90 to 125, 126 to 162, and 310 to 347; these read FLEA…NGDS, QEMI…KEPE, LLDP…VSNH, and SILE…SRNV.

In terms of assembly, oligomeric complex that consists of at least the alpha, beta, beta', gamma, delta, epsilon and zeta subunits.

The protein resides in the cytoplasm. Its subcellular location is the golgi apparatus membrane. It is found in the cytoplasmic vesicle. It localises to the COPI-coated vesicle membrane. Its function is as follows. The coatomer is a cytosolic protein complex that binds to dilysine motifs and reversibly associates with Golgi non-clathrin-coated vesicles, which further mediate biosynthetic protein transport from the ER, via the Golgi up to the trans Golgi network. Coatomer complex is required for budding from Golgi membranes, and is essential for the retrograde Golgi-to-ER transport of dilysine-tagged proteins. The protein is Coatomer subunit beta (sec26) of Schizosaccharomyces pombe (strain 972 / ATCC 24843) (Fission yeast).